A 312-amino-acid chain; its full sequence is Methionyl-tRNA formyltransferase (312 aa).

109-112 (SLLP) is a (6S)-5,6,7,8-tetrahydrofolate binding site.

This sequence belongs to the Fmt family.

The catalysed reaction is L-methionyl-tRNA(fMet) + (6R)-10-formyltetrahydrofolate = N-formyl-L-methionyl-tRNA(fMet) + (6S)-5,6,7,8-tetrahydrofolate + H(+). In terms of biological role, attaches a formyl group to the free amino group of methionyl-tRNA(fMet). The formyl group appears to play a dual role in the initiator identity of N-formylmethionyl-tRNA by promoting its recognition by IF2 and preventing the misappropriation of this tRNA by the elongation apparatus. The polypeptide is Methionyl-tRNA formyltransferase (Anaeromyxobacter dehalogenans (strain 2CP-1 / ATCC BAA-258)).